A 1174-amino-acid polypeptide reads, in one-letter code: Probable DNA-directed RNA polymerase I subunit RPA2 (1174 aa).

Over residues 1–16 (MSFQTLERERTFKNPP) the composition is skewed to basic and acidic residues. The tract at residues 1 to 23 (MSFQTLERERTFKNPPKDGTSFP) is disordered. The C4-type zinc-finger motif lies at 1089 to 1118 (CRDCGSIISIMSTISMNGVGSASEVRCRSC).

It belongs to the RNA polymerase beta chain family. Component of the RNA polymerase I (Pol I) complex consisting of 14 subunits.

It is found in the nucleus. The protein resides in the nucleolus. It carries out the reaction RNA(n) + a ribonucleoside 5'-triphosphate = RNA(n+1) + diphosphate. Functionally, DNA-dependent RNA polymerase catalyzes the transcription of DNA into RNA using the four ribonucleoside triphosphates as substrates. Second largest core component of RNA polymerase I which synthesizes ribosomal RNA precursors. Proposed to contribute to the polymerase catalytic activity and forms the polymerase active center together with the largest subunit. Pol I is composed of mobile elements and RPA2 is part of the core element with the central large cleft and probably a clamp element that moves to open and close the cleft. This is Probable DNA-directed RNA polymerase I subunit RPA2 (rpa2) from Schizosaccharomyces pombe (strain 972 / ATCC 24843) (Fission yeast).